Here is a 191-residue protein sequence, read N- to C-terminus: dTTP/UTP pyrophosphatase (191 aa).

Aspartate 71 serves as the catalytic Proton acceptor.

Belongs to the Maf family. YhdE subfamily. Requires a divalent metal cation as cofactor.

The protein localises to the cytoplasm. It carries out the reaction dTTP + H2O = dTMP + diphosphate + H(+). The catalysed reaction is UTP + H2O = UMP + diphosphate + H(+). In terms of biological role, nucleoside triphosphate pyrophosphatase that hydrolyzes dTTP and UTP. May have a dual role in cell division arrest and in preventing the incorporation of modified nucleotides into cellular nucleic acids. In Hyphomonas neptunium (strain ATCC 15444), this protein is dTTP/UTP pyrophosphatase.